The primary structure comprises 388 residues: 4-hydroxy-3-methylbut-2-en-1-yl diphosphate synthase (flavodoxin) (388 aa).

Residues Cys-281, Cys-284, Cys-316, and Glu-323 each contribute to the [4Fe-4S] cluster site.

Belongs to the IspG family. [4Fe-4S] cluster is required as a cofactor.

It carries out the reaction (2E)-4-hydroxy-3-methylbut-2-enyl diphosphate + oxidized [flavodoxin] + H2O + 2 H(+) = 2-C-methyl-D-erythritol 2,4-cyclic diphosphate + reduced [flavodoxin]. Its pathway is isoprenoid biosynthesis; isopentenyl diphosphate biosynthesis via DXP pathway; isopentenyl diphosphate from 1-deoxy-D-xylulose 5-phosphate: step 5/6. Functionally, converts 2C-methyl-D-erythritol 2,4-cyclodiphosphate (ME-2,4cPP) into 1-hydroxy-2-methyl-2-(E)-butenyl 4-diphosphate. The polypeptide is 4-hydroxy-3-methylbut-2-en-1-yl diphosphate synthase (flavodoxin) (Arthrobacter sp. (strain FB24)).